The sequence spans 433 residues: Histidinol dehydrogenase 2 (433 aa).

NAD(+) contacts are provided by Y130, Q192, and N215. Substrate contacts are provided by S238, Q260, and H263. Residues Q260 and H263 each contribute to the Zn(2+) site. Residues E328 and H329 each act as proton acceptor in the active site. Residues H329, D362, E416, and H421 each contribute to the substrate site. D362 is a Zn(2+) binding site. Position 421 (H421) interacts with Zn(2+).

Belongs to the histidinol dehydrogenase family. Zn(2+) is required as a cofactor.

It catalyses the reaction L-histidinol + 2 NAD(+) + H2O = L-histidine + 2 NADH + 3 H(+). It participates in amino-acid biosynthesis; L-histidine biosynthesis; L-histidine from 5-phospho-alpha-D-ribose 1-diphosphate: step 9/9. Functionally, catalyzes the sequential NAD-dependent oxidations of L-histidinol to L-histidinaldehyde and then to L-histidine. In Nostoc sp. (strain PCC 7120 / SAG 25.82 / UTEX 2576), this protein is Histidinol dehydrogenase 2 (hisD2).